The sequence spans 268 residues: Putative hydro-lyase ACICU_01268 (268 aa).

This sequence belongs to the D-glutamate cyclase family.

In Acinetobacter baumannii (strain ACICU), this protein is Putative hydro-lyase ACICU_01268.